Reading from the N-terminus, the 235-residue chain is Octanoyltransferase (235 aa).

The BPL/LPL catalytic domain maps to 44-231 (DTTADELWLV…HQVGLPNENN (188 aa)). Residues 83-90 (RGGQVTYH), 150-152 (SLG), and 163-165 (GLA) contribute to the substrate site. The active-site Acyl-thioester intermediate is the Cys-181.

It belongs to the LipB family.

The protein resides in the cytoplasm. The enzyme catalyses octanoyl-[ACP] + L-lysyl-[protein] = N(6)-octanoyl-L-lysyl-[protein] + holo-[ACP] + H(+). It functions in the pathway protein modification; protein lipoylation via endogenous pathway; protein N(6)-(lipoyl)lysine from octanoyl-[acyl-carrier-protein]: step 1/2. Functionally, catalyzes the transfer of endogenously produced octanoic acid from octanoyl-acyl-carrier-protein onto the lipoyl domains of lipoate-dependent enzymes. Lipoyl-ACP can also act as a substrate although octanoyl-ACP is likely to be the physiological substrate. This is Octanoyltransferase from Colwellia psychrerythraea (strain 34H / ATCC BAA-681) (Vibrio psychroerythus).